We begin with the raw amino-acid sequence, 138 residues long: Basic phospholipase A2 homolog MjTX-I (138 aa).

An N-terminal signal peptide occupies residues 1–16 (MRTLWIMAVLLVGVEG). Val34 contributes to the suramin binding site. Cystine bridges form between Cys42–Cys132, Cys44–Cys60, Cys59–Cys111, Cys65–Cys138, Cys66–Cys104, Cys73–Cys97, and Cys91–Cys102. Asn43 lines the varespladib pocket. Suramin contacts are provided by Gly45 and Gly48. Positions 63 and 64 each coordinate varespladib. Lys85 is a binding site for suramin.

This sequence belongs to the phospholipase A2 family. Group II subfamily. K49 sub-subfamily. As to quaternary structure, monomer in solution. Homodimer; non-covalently linked (probable conventional/extended dimer conformation). Homotetramer (dimer of homodimer (probable conventional/extended dimer conformation)); non-covalently linked. Homooligomer. As to expression, expressed by the venom gland.

It is found in the secreted. Its activity is regulated as follows. Myotoxin activity is inhibited by suramin and varespladib. Inhibition by suramin may be caused by (i) distortion of MDiS from both monomers impairing the membrane disruption mechanism by the toxin and (ii) surface electrostatic changes of the complex that interfere with the toxin membrane dockage process (putative-MDoS is partially hidden). Inhibition by varespladib is probably through varespladib binding to MDoS. Its function is as follows. Snake venom phospholipase A2 homolog that lacks enzymatic activity. In vivo, it displays local myotoxin and edema-inducing activities and is lethal by intraperitoneal injection. The myotoxicity effect is weaker in comparison to other myotoxins, probably due to the formation of high molecular weight complexes and to the oligomeric conformation (conventional dimer). It shows specificity toward neurons and myotubes, but not on a variety of other cell types. This PLA2 excites a cohort of sensory neurons via ATP release and consequent activation of P2RX2 and/or P2RX3 purinergic receptors. Pannexin hemichannels act as downstream mediators of toxin-evoked ATP release. In vivo, it elicits nonneurogenic inflammatory pain, thermal hyperalgesia, and mechanical allodynia, of which the latter is completely dependent on purinergic signaling. The protein is Basic phospholipase A2 homolog MjTX-I of Bothrops moojeni (Lance-headed viper).